Consider the following 431-residue polypeptide: Adenylosuccinate synthetase (431 aa).

GTP is bound by residues 12-18 and 40-42; these read GDEGKGK and GHS. Aspartate 13 acts as the Proton acceptor in catalysis. Mg(2+)-binding residues include aspartate 13 and glycine 40. Residues 13–16 and 38–41 each bind IMP; these read DEGK and NAGH. Catalysis depends on histidine 41, which acts as the Proton donor. Residues 114 to 133 are disordered; that stretch reads QQQERDRSKNGEKIGTTNKG. Residues 115–125 are compositionally biased toward basic and acidic residues; sequence QQERDRSKNGE. IMP-binding residues include threonine 130, arginine 144, glutamine 225, threonine 240, and arginine 304. 300–306 is a binding site for substrate; it reads TVTKRPR. GTP contacts are provided by residues arginine 306, 332–334, and 414–416; these read CLD and SIG.

The protein belongs to the adenylosuccinate synthetase family. As to quaternary structure, homodimer. Requires Mg(2+) as cofactor.

It is found in the cytoplasm. The catalysed reaction is IMP + L-aspartate + GTP = N(6)-(1,2-dicarboxyethyl)-AMP + GDP + phosphate + 2 H(+). It participates in purine metabolism; AMP biosynthesis via de novo pathway; AMP from IMP: step 1/2. Plays an important role in the de novo pathway of purine nucleotide biosynthesis. Catalyzes the first committed step in the biosynthesis of AMP from IMP. This is Adenylosuccinate synthetase from Pediococcus pentosaceus (strain ATCC 25745 / CCUG 21536 / LMG 10740 / 183-1w).